A 503-amino-acid chain; its full sequence is Galactose/methyl galactoside import ATP-binding protein MglA 2 (503 aa).

2 ABC transporter domains span residues 11 to 246 and 257 to 503; these read LEMT…VGRE and TPKE…SRYL. 43–50 contributes to the ATP binding site; it reads GENGAGKS.

It belongs to the ABC transporter superfamily. Galactose/methyl galactoside importer (TC 3.A.1.2.3) family. As to quaternary structure, the complex is composed of one ATP-binding protein (MglA), two transmembrane proteins (MglC) and a solute-binding protein (MglB).

The protein localises to the cell inner membrane. The catalysed reaction is D-galactose(out) + ATP + H2O = D-galactose(in) + ADP + phosphate + H(+). The enzyme catalyses methyl beta-D-galactoside(out) + ATP + H2O = methyl beta-D-galactoside(in) + ADP + phosphate + H(+). In terms of biological role, part of the ABC transporter complex MglABC involved in galactose/methyl galactoside import. Responsible for energy coupling to the transport system. The polypeptide is Galactose/methyl galactoside import ATP-binding protein MglA 2 (Photobacterium profundum (strain SS9)).